Consider the following 125-residue polypeptide: Photosystem II extrinsic protein U (125 aa).

An N-terminal signal peptide occupies residues 1–29 (MKRLLSWLTGLVVIAGLLIGLLVPPSVSA).

The protein belongs to the PsbU family. PSII is composed of 1 copy each of membrane proteins PsbA, PsbB, PsbC, PsbD, PsbE, PsbF, PsbH, PsbI, PsbJ, PsbK, PsbL, PsbM, PsbT, PsbX, PsbY, PsbZ, Psb30/Ycf12, peripheral proteins PsbO, CyanoQ (PsbQ), PsbU, PsbV and a large number of cofactors. It forms dimeric complexes.

It is found in the cellular thylakoid membrane. One of the extrinsic, lumenal subunits of photosystem II (PSII). PSII is a light-driven water plastoquinone oxidoreductase, using light energy to abstract electrons from H(2)O, generating a proton gradient subsequently used for ATP formation. The extrinsic proteins stabilize the structure of photosystem II oxygen-evolving complex (OEC), the ion environment of oxygen evolution and protect the OEC against heat-induced inactivation. The protein is Photosystem II extrinsic protein U of Synechococcus sp. (strain CC9311).